The chain runs to 64 residues: MPKMKTKSGAAKRFKKTANGFKHKHAFKSHILTKMTTKRKRQLRGCSQVHPSDVAKVERMLRVR.

The interval Met1–His23 is disordered.

It belongs to the bacterial ribosomal protein bL35 family.

This chain is Large ribosomal subunit protein bL35, found in Stutzerimonas stutzeri (strain A1501) (Pseudomonas stutzeri).